Consider the following 1404-residue polypeptide: DNA-directed RNA polymerase subunit beta' (1404 aa).

Cysteine 60, cysteine 62, cysteine 75, and cysteine 78 together coordinate Zn(2+). The Mg(2+) site is built by aspartate 449, aspartate 451, and aspartate 453. Zn(2+) is bound by residues cysteine 778, cysteine 852, cysteine 859, and cysteine 862. The segment at 1380–1404 (LDRPLEEEEEEEIPQAIAEESDAEE) is disordered. Residues 1384-1404 (LEEEEEEEIPQAIAEESDAEE) show a composition bias toward acidic residues.

This sequence belongs to the RNA polymerase beta' chain family. In terms of assembly, the RNAP catalytic core consists of 2 alpha, 1 beta, 1 beta' and 1 omega subunit. When a sigma factor is associated with the core the holoenzyme is formed, which can initiate transcription. The cofactor is Mg(2+). Requires Zn(2+) as cofactor.

The catalysed reaction is RNA(n) + a ribonucleoside 5'-triphosphate = RNA(n+1) + diphosphate. In terms of biological role, DNA-dependent RNA polymerase catalyzes the transcription of DNA into RNA using the four ribonucleoside triphosphates as substrates. This chain is DNA-directed RNA polymerase subunit beta', found in Leptospira interrogans serogroup Icterohaemorrhagiae serovar Lai (strain 56601).